The following is a 319-amino-acid chain: MASEEKIYDVIIIGAGPAGMTAALYTSRADLDTLMIERGVPGGQMVNTAEVENYPGFDSILGPDLSDKMLSGAKQFGAEYAYGDIKEVVDGKEFKTVTAGSKTYKARAIIIATGAEHRKLGAAGEEELSGRGVSYCAVCDGAFFKNRELIVVGGGDSAVEEGTYLTRYADKVTIVHRRDKLRAQQILQDRAFKDEKVDFIWNSTVEEIVGDGKKVTGAKLVSTVDGSESIMPVDGVFIYVGLVPLTKAFLNLGITDDEGYIVTDEEMRTNLPGIFAAGDVRAKSLRQIVTATGDGGLAGQNAQKYVEELKESLEAEAAK.

37 to 44 lines the FAD pocket; that stretch reads ERGVPGGQ. A disulfide bond links Cys136 and Cys139. 279-288 serves as a coordination point for FAD; that stretch reads DVRAKSLRQI.

The protein belongs to the class-II pyridine nucleotide-disulfide oxidoreductase family. In terms of assembly, homodimer. The cofactor is FAD.

Its subcellular location is the cytoplasm. It catalyses the reaction [thioredoxin]-dithiol + NADP(+) = [thioredoxin]-disulfide + NADPH + H(+). The polypeptide is Thioredoxin reductase (trxB) (Listeria monocytogenes serovar 1/2a (strain ATCC BAA-679 / EGD-e)).